The following is a 129-amino-acid chain: UPF0212 protein MA_1372 (129 aa).

The protein belongs to the UPF0212 family.

The chain is UPF0212 protein MA_1372 from Methanosarcina acetivorans (strain ATCC 35395 / DSM 2834 / JCM 12185 / C2A).